Here is a 227-residue protein sequence, read N- to C-terminus: Protein PhlB (227 aa).

A signal peptide spans 1–35 (MPEGRRLRRALAIALLALVAVTGLLMMAKEQQMGQ). ANK repeat units lie at residues 75 to 104 (RQVT…DPAA), 108 to 137 (DGNS…QMNV), 142 to 171 (TGAT…DTTL), and 175 to 204 (LGDT…MPGR).

Functionally, cell-protective protein that neutralizes the intracellular lysis capacity of phospholipase A1 through a direct interaction with the enzyme. In Serratia liquefaciens, this protein is Protein PhlB (phlB).